Consider the following 249-residue polypeptide: Coproheme decarboxylase (249 aa).

Fe-coproporphyrin III-binding positions include arginine 131, 145–149 (YPMDK), histidine 172, and glutamine 185. The active site involves tyrosine 145.

The protein belongs to the ChdC family. Type 1 subfamily. Fe-coproporphyrin III serves as cofactor.

It carries out the reaction Fe-coproporphyrin III + 2 H2O2 + 2 H(+) = heme b + 2 CO2 + 4 H2O. The catalysed reaction is Fe-coproporphyrin III + H2O2 + H(+) = harderoheme III + CO2 + 2 H2O. It catalyses the reaction harderoheme III + H2O2 + H(+) = heme b + CO2 + 2 H2O. The protein operates within porphyrin-containing compound metabolism; protoheme biosynthesis. Functionally, involved in coproporphyrin-dependent heme b biosynthesis. Catalyzes the decarboxylation of Fe-coproporphyrin III (coproheme) to heme b (protoheme IX), the last step of the pathway. The reaction occurs in a stepwise manner with a three-propionate intermediate. The protein is Coproheme decarboxylase of Staphylococcus saprophyticus subsp. saprophyticus (strain ATCC 15305 / DSM 20229 / NCIMB 8711 / NCTC 7292 / S-41).